A 555-amino-acid polypeptide reads, in one-letter code: Tau-cadinol synthase (555 aa).

5 residues coordinate (2E,6E)-farnesyl diphosphate: R270, D307, D311, R448, and D451. Mg(2+) contacts are provided by D307 and D311. The DDXXD motif signature appears at 307–311; it reads DDTYD. Mg(2+) is bound by residues D451, S455, and E459.

The protein belongs to the terpene synthase family. It depends on Mg(2+) as a cofactor.

It carries out the reaction (2E,6E)-farnesyl diphosphate + H2O = tau-cadinol + diphosphate. It catalyses the reaction (2E,6E)-farnesyl diphosphate = (+)-gamma-cadinene + diphosphate. The protein operates within secondary metabolite biosynthesis; terpenoid biosynthesis. In terms of biological role, sesquiterpene synthase that catalyzes the formation of sesquiterpenes and sesquiterpenoid alcohols. Converts farnesyl diphosphate (FPP) to tau-cadinol. Converts FPP to gamma-cadinene. Tau-cadinol is the major product. The sequence is that of Tau-cadinol synthase from Lavandula angustifolia (Lavender).